Here is a 936-residue protein sequence, read N- to C-terminus: MAAQRNRSKESKDCSGLVLLCLFFGIPWEAGARQISYSIPEELEKGSFVGNISKDLGLAPRELAERGVRIVSRGRTQLFSLNPRSGSLITAGRIDREELCAQSARCVVSFNILVEDRVKLFGIEIEVTDINDNAPKFQAENLDVKINENVAAGMRFPLPEAIDPDVGVNSLQSYQLSPNKHFSLRVQSRANGVKYPELVLEHSLDREEEAIHHLVLTASDGGDPLRSGTVLVSVTVFDANDNAPVFTLPEYRVSVPENLPVGTQLLTVTATDRDEGANGEVTYSFRKLPDTQLLKFQLNKYTGEIKISENLDYEETGFYEIEIQAEDGGAYLATAKVLITVEDVNDNSPELTITSLFSPVTEDSPLGTVVALLNVHDLDSEQNGQVTCSILAYLPFKLEKSIDSYYRLVIHRALDREQVSSYNITVTATDGGSPPLSTEAHFMLQVADINDNPPTFSQVSYFTYIPENNARGASIFSVTALDPDSKENAQIIYSLAEDTIQGVPLSSYISINSDTGVLYALRSFDYEQFHELQMQVTASDSGDPPLSSNVSLSLFVLDQNDNAPEILYPALPTDGSTGVELAPRSAEPGYLVTKVVAVDRDSGQNAWLSYRLLKASEPGLFAVGEHTGEVRTARALLDRDALKQSLVVAVQDHGQPPLSATVTLTVAVADSIPQVLADLGSFESPANSETSDLTLYLVVAVAAVSCVFLAFVIVLLAHRLRRWHKSRLLQASGGGLTGVSGSHFVGVDGVRAFLQTYSHEVSLTADSRKSHLIFPQPNYADTLISQESCEKNDPLSLLDDSKFPIEDTPLVPQAPPNTDWRFSQAQRPGTSGSQNGDDTGTWPNNQFDTEMLQAMILASASEAADGSSTLGGGAGTMGLSARYGPQFTLQHVPDYRQNVYIPGSNATLTNAAGKRDGKAPAGGNGNKKKSGKKEKK.

Positions 1 to 32 (MAAQRNRSKESKDCSGLVLLCLFFGIPWEAGA) are cleaved as a signal peptide. 6 consecutive Cadherin domains span residues 33-137 (RQIS…APKF), 138-246 (QAEN…APVF), 247-351 (TLPE…SPEL), 352-456 (TITS…PPTF), 457-566 (SQVS…APEI), and 574-687 (DGST…SPAN). The Extracellular portion of the chain corresponds to 33 to 696 (RQISYSIPEE…NSETSDLTLY (664 aa)). A glycan (N-linked (GlcNAc...) asparagine) is linked at Asn-51. 2 N-linked (GlcNAc...) asparagine glycosylation sites follow: Asn-423 and Asn-549. Residues 697–717 (LVVAVAAVSCVFLAFVIVLLA) form a helical membrane-spanning segment. Residues 718 to 936 (HRLRRWHKSR…KKKSGKKEKK (219 aa)) lie on the Cytoplasmic side of the membrane. Disordered regions lie at residues 806–845 (EDTP…WPNN) and 906–936 (ATLT…KEKK). A compositionally biased stretch (polar residues) spans 820-845 (WRFSQAQRPGTSGSQNGDDTGTWPNN). The segment covering 926 to 936 (NKKKSGKKEKK) has biased composition (basic residues).

Its subcellular location is the cell membrane. Functionally, potential calcium-dependent cell-adhesion protein. May be involved in the establishment and maintenance of specific neuronal connections in the brain. In Homo sapiens (Human), this protein is Protocadherin gamma-A10 (PCDHGA10).